A 444-amino-acid polypeptide reads, in one-letter code: Tubulin beta chain (444 aa).

The MREI motif signature appears at Met1–Ile4. Gln11 contributes to the GTP binding site. A Phosphoserine modification is found at Ser40. Thr55 carries the phosphothreonine modification. Lys58 carries the post-translational modification N6-acetyllysine; alternate. Lys58 carries the N6-succinyllysine; alternate modification. A Glycyl lysine isopeptide (Lys-Gly) (interchain with G-Cter in ubiquitin); alternate cross-link involves residue Lys58. Positions 69, 138, 142, 143, and 144 each coordinate GTP. Position 69 (Glu69) interacts with Mg(2+). Ser172 carries the phosphoserine; by CDK1 modification. Positions 204 and 226 each coordinate GTP. Residues Thr285 and Thr290 each carry the phosphothreonine modification. Omega-N-methylarginine is present on Arg318. Lys324 is covalently cross-linked (Glycyl lysine isopeptide (Lys-Gly) (interchain with G-Cter in ubiquitin)). The segment at Gln423–Ala444 is disordered. Positions Thr429 to Ala444 are enriched in acidic residues. 5-glutamyl polyglutamate is present on residues Glu434, Glu438, Glu439, and Glu441. A 5-glutamyl glycine mark is found at Glu438, Glu439, Glu441, Glu442, and Glu443.

The protein belongs to the tubulin family. In terms of assembly, heterodimer of alpha and beta chains. A typical microtubule is a hollow water-filled tube with an outer diameter of 25 nm and an inner diameter of 15 nM. Alpha-beta heterodimers associate head-to-tail to form protofilaments running lengthwise along the microtubule wall with the beta-tubulin subunit facing the microtubule plus end conferring a structural polarity. Microtubules usually have 13 protofilaments but different protofilament numbers can be found in some organisms and specialized cells. Interacts with CIMAP3. Interacts with DIAPH1. Interacts with MX1. May interact with RNABP10. Interacts with CFAP157. Nascent tubulin polypeptide interacts (via beta-tubulin MREI motif) with TTC5/STRAP; this interaction results in tubulin mRNA-targeted degradation. Mg(2+) serves as cofactor. Some glutamate residues at the C-terminus are polyglycylated, resulting in polyglycine chains on the gamma-carboxyl group. Glycylation is mainly limited to tubulin incorporated into axonemes (cilia and flagella) whereas glutamylation is prevalent in neuronal cells, centrioles, axonemes, and the mitotic spindle. Both modifications can coexist on the same protein on adjacent residues, and lowering polyglycylation levels increases polyglutamylation, and reciprocally. Cilia and flagella glycylation is required for their stability and maintenance. Flagella glycylation controls sperm motility. In terms of processing, some glutamate residues at the C-terminus are polyglutamylated, resulting in polyglutamate chains on the gamma-carboxyl group. Polyglutamylation plays a key role in microtubule severing by spastin (SPAST). SPAST preferentially recognizes and acts on microtubules decorated with short polyglutamate tails: severing activity by SPAST increases as the number of glutamates per tubulin rises from one to eight, but decreases beyond this glutamylation threshold. Glutamylation is also involved in cilia motility. Post-translationally, phosphorylated on Ser-172 by CDK1 during the cell cycle, from metaphase to telophase, but not in interphase. This phosphorylation inhibits tubulin incorporation into microtubules.

The protein resides in the cytoplasm. It is found in the cytoskeleton. Its function is as follows. Tubulin is the major constituent of microtubules, a cylinder consisting of laterally associated linear protofilaments composed of alpha- and beta-tubulin heterodimers. Microtubules grow by the addition of GTP-tubulin dimers to the microtubule end, where a stabilizing cap forms. Below the cap, tubulin dimers are in GDP-bound state, owing to GTPase activity of alpha-tubulin. This Sus scrofa (Pig) protein is Tubulin beta chain (TUBB).